A 277-amino-acid polypeptide reads, in one-letter code: Large ribosomal subunit protein uL2 (277 aa).

Disordered stretches follow at residues 1–20 (MAVKKYRPYTPSRRQMTTAD) and 210–277 (GRSR…RGGK). A compositionally biased stretch (basic residues) spans 210–221 (GRSRWLGRKPHQ).

Belongs to the universal ribosomal protein uL2 family. In terms of assembly, part of the 50S ribosomal subunit. Forms a bridge to the 30S subunit in the 70S ribosome.

One of the primary rRNA binding proteins. Required for association of the 30S and 50S subunits to form the 70S ribosome, for tRNA binding and peptide bond formation. It has been suggested to have peptidyltransferase activity; this is somewhat controversial. Makes several contacts with the 16S rRNA in the 70S ribosome. The chain is Large ribosomal subunit protein uL2 from Deinococcus deserti (strain DSM 17065 / CIP 109153 / LMG 22923 / VCD115).